The primary structure comprises 335 residues: Probable phosphoglycerate mutase ARB_03491 (335 aa).

Residues M1–A24 form the signal peptide. H108 serves as the catalytic Tele-phosphohistidine intermediate. E211 serves as the catalytic Proton donor/acceptor.

This sequence belongs to the phosphoglycerate mutase family.

It is found in the secreted. Functionally, probable phosphomutase that may have a function related to the manipulation of phosphate groups on carbohydrates. The polypeptide is Probable phosphoglycerate mutase ARB_03491 (Arthroderma benhamiae (strain ATCC MYA-4681 / CBS 112371) (Trichophyton mentagrophytes)).